Reading from the N-terminus, the 404-residue chain is Voltage-gated potassium channel subunit beta-3 (404 aa).

Polar residues predominate over residues 1 to 14 (MQVSIACTEQNLRS). Positions 1–77 (MQVSIACTEQ…LRESTGRGTG (77 aa)) are disordered. Residues 28 to 50 (PGGGNGGPAGGGHGNPPGGGGSG) are compositionally biased toward gly residues. T97, W98, Q104, and D126 together coordinate NADP(+). The active-site Proton donor/acceptor is the Y131. N199, S229, R230, Q255, W284, P286, L287, A288, C289, K295, R305, G364, S366, Q370, and E373 together coordinate NADP(+).

Belongs to the shaker potassium channel beta subunit family. As to quaternary structure, forms heteromultimeric complex with alpha subunits. Interacts with KCNA5 and KCNB2. In terms of tissue distribution, brain specific. Most prominent expression in cerebellum. Weaker signals detected in cortex, occipital lobe, frontal lobe and temporal lobe. Not detected in spinal cord, heart, lung, liver, kidney, pancreas, placenta and skeletal muscle.

The protein resides in the cytoplasm. In terms of biological role, regulatory subunit of the voltage-gated potassium (Kv) channels composed of pore-forming and potassium-conducting alpha subunits and of regulatory beta subunit. The beta-3/KCNAB3 subunit may mediate closure of potassium channels. Increases inactivation of Kv1.5/KCNA5 alpha subunit-containing channels. May display nicotinamide adenine dinucleotide phosphate (NADPH)-dependent aldoketoreductase activity. The binding of oxidized and reduced NADP(H) cofactors may be required for the regulation of potassium channel activity. The polypeptide is Voltage-gated potassium channel subunit beta-3 (Homo sapiens (Human)).